The sequence spans 377 residues: Nucleosome assembly protein 1;2 (377 aa).

The stretch at 26–80 forms a coiled coil; sequence VNVLKNKLHDLTGKHSNVTESLSPNVRKRVEALREIQTEHDELEAKFFEERAALE. Positions 47–62 match the Nuclear export signal motif; the sequence is LSPNVRKRVEALREIQ. The Nuclear localization signal signature appears at 223-228; it reads KKKPKK. The disordered stretch occupies residues 298–377; sequence EAAEDDYAEL…GERPPECKQQ (80 aa). Residues 299 to 342 are compositionally biased toward acidic residues; it reads AAEDDYAELEDDEDEDDDEEDDEDEDEEEEDEEDDEDEEEDEDE. Residue C374 is modified to Cysteine methyl ester. C374 is lipidated: S-farnesyl cysteine. The propeptide at 375–377 is removed in mature form; that stretch reads KQQ.

The protein belongs to the nucleosome assembly protein (NAP) family. In terms of assembly, binds preferentially histone H1 in vitro. Interacts with CYCB1;1.

It is found in the nucleus. The protein resides in the cytoplasm. Functionally, may modulate chromatin structure by regulation of nucleosome assembly/disassembly. Could function together with B-type cyclins in the regulation of microtubule dynamics. The polypeptide is Nucleosome assembly protein 1;2 (NAP1;2) (Nicotiana tabacum (Common tobacco)).